A 374-amino-acid chain; its full sequence is MEHVDSPLYLGLMSGTSADGIDAALVRFADDTHRRCELVAGTTVAWEPQLRETLVALGQGAETVAIDALGQLDAQVGLAFAAAANQLIGDSGVERRQIRAIGSHGQTIRHRPNASPAFTWQIGDASRIAEHTGITTVADFRRRDVAAGGQGAPLMPAFHLAMLGAGDEDRAVLNLGGIGNLTLIPRDGAVRGFDTGPANALLDSWCQRHHGTPFDADGAFAASGRVDAALLQALLADPWFALPPPKSTGREQFHLDWAVQAMGNARLDAADVQATLLELTAASVADALLRLQPTTRRVLVCGGGVRNPVLLARLAARLPGAMVESSARYGLDPDYLEAMGFAWLAAELLAGRAANLPSVTGAAGPRLLGAIYPA.

15-22 is a binding site for ATP; that stretch reads GTSADGID.

It belongs to the anhydro-N-acetylmuramic acid kinase family.

The catalysed reaction is 1,6-anhydro-N-acetyl-beta-muramate + ATP + H2O = N-acetyl-D-muramate 6-phosphate + ADP + H(+). It functions in the pathway amino-sugar metabolism; 1,6-anhydro-N-acetylmuramate degradation. The protein operates within cell wall biogenesis; peptidoglycan recycling. Its function is as follows. Catalyzes the specific phosphorylation of 1,6-anhydro-N-acetylmuramic acid (anhMurNAc) with the simultaneous cleavage of the 1,6-anhydro ring, generating MurNAc-6-P. Is required for the utilization of anhMurNAc either imported from the medium or derived from its own cell wall murein, and thus plays a role in cell wall recycling. In Xanthomonas axonopodis pv. citri (strain 306), this protein is Anhydro-N-acetylmuramic acid kinase.